A 509-amino-acid chain; its full sequence is MKRALLSVSDKRGLIDFAKGLIKNNYEIISTGGTLKFLTEAGVKAKAVEEITGFPEILNGRVKTLHPKIHAALLAKRENSEHMKTLEEHQITPIDLLAVNLYPFKETIEKKDVSYDQAIENIDIGGPSMLRSAAKNARDVIVVVDPDDYDSILKAIANDDLSHDFRRHLQAKTFRHTAAYDALIADYLSKEEYPEKLTVTYDKDFDLRYGENPNQTAAVYADAIPKAYSILQAKILHGKKLSYNNIKDADAALRTIADFQDQPTVVTLKHMNPAGIGQAITIEKAWDKAFYADDISIFGGIVVLNREVDLATAQKMHTIFLEIIIAPGFSEEAYQILAKKKNLRLLTVAMTNTLPKELELTSVLGGAVVQEMDRLVENAADFEVVSSAKPTDEQLEALVFAQKAVKHVKSNAILIAAQGQTLGIGAGQPNRIDSVKIAFKHAEAKKNFDQAVLASDAFFPMDDSVEFAAEHGIKAIVEPGGSIKDKDSIAMADKLGVVLVFSHNRHFRH.

Residues 1–144 (MKRALLSVSD…KNARDVIVVV (144 aa)) enclose the MGS-like domain.

Belongs to the PurH family.

It carries out the reaction (6R)-10-formyltetrahydrofolate + 5-amino-1-(5-phospho-beta-D-ribosyl)imidazole-4-carboxamide = 5-formamido-1-(5-phospho-D-ribosyl)imidazole-4-carboxamide + (6S)-5,6,7,8-tetrahydrofolate. It catalyses the reaction IMP + H2O = 5-formamido-1-(5-phospho-D-ribosyl)imidazole-4-carboxamide. It participates in purine metabolism; IMP biosynthesis via de novo pathway; 5-formamido-1-(5-phospho-D-ribosyl)imidazole-4-carboxamide from 5-amino-1-(5-phospho-D-ribosyl)imidazole-4-carboxamide (10-formyl THF route): step 1/1. It functions in the pathway purine metabolism; IMP biosynthesis via de novo pathway; IMP from 5-formamido-1-(5-phospho-D-ribosyl)imidazole-4-carboxamide: step 1/1. In Oenococcus oeni (strain ATCC BAA-331 / PSU-1), this protein is Bifunctional purine biosynthesis protein PurH.